The following is a 217-amino-acid chain: ATP-dependent Clp protease proteolytic subunit (217 aa).

The Nucleophile role is filled by serine 120. Histidine 145 is an active-site residue.

The protein belongs to the peptidase S14 family. As to quaternary structure, fourteen ClpP subunits assemble into 2 heptameric rings which stack back to back to give a disk-like structure with a central cavity, resembling the structure of eukaryotic proteasomes.

It is found in the cytoplasm. It carries out the reaction Hydrolysis of proteins to small peptides in the presence of ATP and magnesium. alpha-casein is the usual test substrate. In the absence of ATP, only oligopeptides shorter than five residues are hydrolyzed (such as succinyl-Leu-Tyr-|-NHMec, and Leu-Tyr-Leu-|-Tyr-Trp, in which cleavage of the -Tyr-|-Leu- and -Tyr-|-Trp bonds also occurs).. In terms of biological role, cleaves peptides in various proteins in a process that requires ATP hydrolysis. Has a chymotrypsin-like activity. Plays a major role in the degradation of misfolded proteins. The polypeptide is ATP-dependent Clp protease proteolytic subunit (Ralstonia nicotianae (strain ATCC BAA-1114 / GMI1000) (Ralstonia solanacearum)).